A 619-amino-acid chain; its full sequence is N-acetylmuramoyl-L-alanine amidase domain-containing protein SAOUHSC_02979 (619 aa).

The signal sequence occupies residues 1–27 (MPKNKILIYLLSTTLVLPTLVSPTAYA). Disordered stretches follow at residues 25–83 (AYAD…TIDD), 134–226 (SDYE…SMSD), and 238–290 (EDAK…NQKD). Basic and acidic residues-rich tracts occupy residues 30–65 (PQKD…KADK), 73–82 (NNDKKFKTID), and 137–146 (EQPRNGEKST). Residues 147–156 (NDSNKNSDNS) are compositionally biased toward low complexity. The segment covering 157 to 175 (IKNDTDTQSSKQDKADNQK) has biased composition (basic and acidic residues). A compositionally biased stretch (polar residues) spans 176–192 (APKSNNTKPSTSNKQPN). The span at 214-226 (QKSSSKDNQSMSD) shows a compositional bias: low complexity. The span at 238-260 (EDAKKTQKDYASQSKKDKNEKSN) shows a compositional bias: basic and acidic residues. Positions 327–468 (IAKDAHRIGQ…LNSIIKHYQL (142 aa)) are N-acetylmuramoyl-L-alanine amidase. The region spanning 488–617 (DYDDSSDEFK…AAAEELSYIT (130 aa)) is the Peptidase C51 domain.

The protein in the N-terminal section; belongs to the N-acetylmuramoyl-L-alanine amidase 2 family.

It localises to the secreted. In Staphylococcus aureus (strain NCTC 8325 / PS 47), this protein is N-acetylmuramoyl-L-alanine amidase domain-containing protein SAOUHSC_02979.